Consider the following 1036-residue polypeptide: UDP-N-acetylglucosamine--peptide N-acetylglucosaminyltransferase 110 kDa subunit (1036 aa).

Position 2 is an N-acetylalanine (alanine 2). Phosphoserine; by GSK3-beta; alternate occurs at positions 3 and 4. O-linked (GlcNAc) serine; alternate glycosylation is found at serine 3 and serine 4. 12 TPR repeats span residues 11–44 (STGLAELAHREYQAGDFEAAERHCMQLWRQEPDN), 79–112 (AEAYSNLGNVYKERGQLQEAIEHYRHALRLKPDF), 113–146 (IDGYINLAAALVAAGDMEGAVQAYVSALQYNPDL), 147–180 (YCVRSDLGNLLKALGRLEEAKACYLKAIETQPNF), 181–214 (AVAWSNLGCVFNAQGEIWLAIHHFEKAVTLDPNF), 215–248 (LDAYINLGNVLKEARIFDRAVAAYLRALSLSPNH), 249–282 (AVVHGNLACVYYEQGLIDLAIDTYRRAIELQPHF), 283–316 (PDAYCNLANALKEKGSVAEAEDCYNTALRLCPTH), 317–350 (ADSLNNLANIKREQGNIEEAVRLYRKALEVFPEF), 351–384 (AAAHSNLASVLQQQGKLQEALMHYKEAIRISPTF), 385–418 (ADAYSNMGNTLKEMQDVQGALQCYTRAIQINPAF), and 419–452 (ADAHSNLASIHKDSGNIPEAIASYRTALKLKPDF). The O-linked (GlcNAc) serine; by autocatalysis glycan is linked to serine 389. The residue at position 444 (threonine 444) is a Phosphothreonine. Residues 453 to 463 (PDAYCNLAHCL) form a TPR 13; truncated repeat. Positions 454–456 (DAY) match the DFP motif motif. Positions 478–493 (KLVSIVAEQLEKNRLP) match the Nuclear localization signal motif. Residue histidine 498 is the Proton acceptor of the active site. Residues glutamine 839, lysine 842, 896-898 (APK), 901-904 (HVRR), 920-922 (HTT), and aspartate 925 each bind UDP. Tyrosine 979 carries the post-translational modification Phosphotyrosine. Residues 981-1000 (KKIRGKVWKQRISSPLFNTK) form a required for phosphatidylinositol 3,4,5-triphosphate binding region.

It belongs to the glycosyltransferase 41 family. O-GlcNAc transferase subfamily. In terms of assembly, monomer; may exist in different oligomerization states in cells. Homotrimer, oligomerizes via TPR repeats 6 and 7. Trimerization is not necessary for activity in vitro, however it increases affinity for UDP-GlcNAc. A heterotrimer consisting of two 110 kDa subunits and one highly related 78 kDa subunit is isolated from liver. Component of a THAP1/THAP3-HCFC1-OGT complex. Component of the NSL complex at least composed of MOF/KAT8, KANSL1, KANSL2, KANSL3, MCRS1, PHF20, OGT1/OGT, WDR5 and HCFC1. Found in a complex with KIF5B, RHOT1, RHOT2 and TRAK1. Found in a complex composed of at least SINHCAF, SIN3A, HDAC1, SAP30, RBBP4, OGT and TET1. Component of a complex composed of KMT2E/MLL5, OGT and USP7; the complex stabilizes KMT2E/MLL5, preventing KMT2E/MLL5 ubiquitination and proteasomal-mediated degradation. Interacts (via TPRs 1-6) with SIN3A; the interaction mediates transcriptional repression in parallel with histone deacetylase. Interacts (via TPR 5-6) with TET1, TET2 and TET3. Interacts (via TPR repeats 6 and 7) with ATXN10. Interacts with NSD2. Interacts with PROSER1; this interaction mediates TET2 O-GlcNAcylation and stability by promoting the interaction between OGT and TET2. Several different immunologically-related forms of this protein are found in different tissues (with apparent molecular weights of 110, 80 and 78 kDa); they are probably the result of alternative splicing and/or proteolysis. Post-translationally, O-glycosylated; contains O-GlcNAc. Both p110 and p78 forms are O-glycosylated. In terms of processing, ubiquitinated by the SCF(FBXO31) complex, leading to its proteasomal degradation. Phosphorylation on Ser-3 or Ser-4 by GSK3-beta positively regulates its activity. Phosphorylation at Thr-444 by AMPK promotes nuclear localization. Post-translationally, glycosylated via autocatalysis; O-GlcNAcylation at Ser-389 promotes nuclear localization. Expressed in brain, heart, liver, thymus, muscle, lung, spleen, uterus and ovary; in the kidney only an immunologically-related 78 kDa band is present, which is also present in liver and muscle. In the pancreas, expressed in both exocrine acinar cells and in endocrine cells of the islets of Langerhans.

It localises to the cytoplasm. Its subcellular location is the nucleus. The protein localises to the cell membrane. It is found in the mitochondrion membrane. The protein resides in the cell projection. It catalyses the reaction L-seryl-[protein] + UDP-N-acetyl-alpha-D-glucosamine = 3-O-(N-acetyl-beta-D-glucosaminyl)-L-seryl-[protein] + UDP + H(+). The catalysed reaction is L-threonyl-[protein] + UDP-N-acetyl-alpha-D-glucosamine = 3-O-(N-acetyl-beta-D-glucosaminyl)-L-threonyl-[protein] + UDP + H(+). It participates in protein modification; protein glycosylation. With respect to regulation, inhibited by UDP, UTP and UDP-GlcNAc; 50 mM NaCl or KCl inhibit activity about 70%. In terms of biological role, catalyzes the transfer of a single N-acetylglucosamine from UDP-GlcNAc to a serine or threonine residue in cytoplasmic and nuclear proteins resulting in their modification with a beta-linked N-acetylglucosamine (O-GlcNAc). Glycosylates a large and diverse number of proteins including histone H2B, AKT1, AMPK, ATG4B, CAPRIN1, EZH2, FNIP1, GSDMD, KRT7, LMNA, LMNB1, LMNB2, RPTOR, HOXA1, PFKL, KMT2E/MLL5, MAPT/TAU, TET2, RBL2, RET, NOD2 and HCFC1. Can regulate their cellular processes via cross-talk between glycosylation and phosphorylation or by affecting proteolytic processing. Involved in insulin resistance in muscle and adipocyte cells via glycosylating insulin signaling components and inhibiting the 'Thr-308' phosphorylation of AKT1, enhancing IRS1 phosphorylation and attenuating insulin signaling. Involved in glycolysis regulation by mediating glycosylation of 6-phosphofructokinase PFKL, inhibiting its activity. Plays a key role in chromatin structure by mediating O-GlcNAcylation of 'Ser-112' of histone H2B: recruited to CpG-rich transcription start sites of active genes via its interaction with TET proteins (TET1, TET2 or TET3). As part of the NSL complex indirectly involved in acetylation of nucleosomal histone H4 on several lysine residues. O-GlcNAcylation of 'Ser-75' of EZH2 increases its stability, and facilitating the formation of H3K27me3 by the PRC2/EED-EZH2 complex. Stabilizes KMT2E/MLL5 by mediating its glycosylation, thereby preventing KMT2E/MLL5 ubiquitination. Regulates circadian oscillation of the clock genes and glucose homeostasis in the liver. Stabilizes clock proteins BMAL1 and CLOCK through O-glycosylation, which prevents their ubiquitination and subsequent degradation. Promotes the CLOCK-BMAL1-mediated transcription of genes in the negative loop of the circadian clock such as PER1/2 and CRY1/2. O-glycosylates HCFC1 and regulates its proteolytic processing and transcriptional activity. Component of a THAP1/THAP3-HCFC1-OGT complex that is required for the regulation of the transcriptional activity of RRM1. Regulates mitochondrial motility in neurons by mediating glycosylation of TRAK1. Promotes autophagy by mediating O-glycosylation of ATG4B. Acts as a regulator of mTORC1 signaling by mediating O-glycosylation of RPTOR and FNIP1: O-GlcNAcylation of RPTOR in response to glucose sufficiency promotes activation of the mTORC1 complex. This is UDP-N-acetylglucosamine--peptide N-acetylglucosaminyltransferase 110 kDa subunit (Ogt) from Rattus norvegicus (Rat).